Consider the following 121-residue polypeptide: Small ribosomal subunit protein uS13 (121 aa).

The tract at residues 94-121 (GLPVRGQRTRTNSRTRKGPKKGAAALKK) is disordered.

This sequence belongs to the universal ribosomal protein uS13 family. As to quaternary structure, part of the 30S ribosomal subunit. Forms a loose heterodimer with protein S19. Forms two bridges to the 50S subunit in the 70S ribosome.

Located at the top of the head of the 30S subunit, it contacts several helices of the 16S rRNA. In the 70S ribosome it contacts the 23S rRNA (bridge B1a) and protein L5 of the 50S subunit (bridge B1b), connecting the 2 subunits; these bridges are implicated in subunit movement. Contacts the tRNAs in the A and P-sites. This chain is Small ribosomal subunit protein uS13, found in Leptothrix cholodnii (strain ATCC 51168 / LMG 8142 / SP-6) (Leptothrix discophora (strain SP-6)).